A 102-amino-acid chain; its full sequence is Small ribosomal subunit protein uS10 (102 aa).

It belongs to the universal ribosomal protein uS10 family. In terms of assembly, part of the 30S ribosomal subunit.

Functionally, involved in the binding of tRNA to the ribosomes. This Mesoplasma florum (strain ATCC 33453 / NBRC 100688 / NCTC 11704 / L1) (Acholeplasma florum) protein is Small ribosomal subunit protein uS10.